We begin with the raw amino-acid sequence, 192 residues long: Ion-translocating oxidoreductase complex subunit B (192 aa).

Residues 1 to 26 (MTAIWIAIAALSALALAFGLVLGYAS) form a hydrophobic region. The 4Fe-4S domain occupies 32–91 (ENDPIVEEVEAMLPQSQCGQCGYPGCRPYAEAVSLNGESINKCGPGGEAMMLKLAEKLNV). Cys-49, Cys-52, Cys-57, Cys-74, Cys-117, Cys-120, Cys-123, Cys-127, Cys-147, Cys-150, Cys-153, and Cys-157 together coordinate [4Fe-4S] cluster. 4Fe-4S ferredoxin-type domains are found at residues 108-137 (HVAW…GSTK) and 138-167 (AVHT…LRPI).

This sequence belongs to the 4Fe4S bacterial-type ferredoxin family. RnfB subfamily. As to quaternary structure, the complex is composed of six subunits: RnfA, RnfB, RnfC, RnfD, RnfE and RnfG. [4Fe-4S] cluster is required as a cofactor.

Its subcellular location is the cell inner membrane. In terms of biological role, part of a membrane-bound complex that couples electron transfer with translocation of ions across the membrane. In Pectobacterium atrosepticum (strain SCRI 1043 / ATCC BAA-672) (Erwinia carotovora subsp. atroseptica), this protein is Ion-translocating oxidoreductase complex subunit B.